Consider the following 603-residue polypeptide: Flavin-dependent halogenase chlA (603 aa).

Residues Gly-16, Ala-19, and Glu-59 each coordinate FAD. Chloride contacts are provided by Thr-352 and Gly-353.

The protein belongs to the flavin-dependent halogenase family.

It carries out the reaction 2,4,6-trihydroxyphenylhexan-1-one + FADH2 + chloride + O2 = (3-chloro-2,4,6-trihydroxyphenyl)hexan-1-one + FAD + 2 H2O + H(+). The enzyme catalyses (3-chloro-2,4,6-trihydroxyphenyl)hexan-1-one + FADH2 + chloride + O2 = (3,5-dichloro-2,4,6-trihydroxyphenyl)hexan-1-one + FAD + 2 H2O. In terms of biological role, flavin-dependent halogenase; part of the gene cluster that mediates the biosynthesis of DIF-1 (Differentiation Inducing Factor-1), a signal molecule involved in the differentiation of pstO (prestalk-O) cells. The three-step process begins with the formation of (2,4,6-trihydroxyphenyl)-1-hexan-1-one (THPH) by the polyketide synthase StlB. THPH is then dichlorinated by the flavin-dependent halogenase ChlA. The last step of DIF-1 biosynthesis is the O-methylation of dichloro-THPH (or des-methyl-DIF-1) by the methyltransferase DmtA to yield DIF-1. The protein is Flavin-dependent halogenase chlA of Dictyostelium discoideum (Social amoeba).